An 80-amino-acid polypeptide reads, in one-letter code: MELADRAVGLLLSSISLSIFTYYTFWVIILPFVDSDHFIHKYFLPQDYAILVPVFAGIALLSLISVFIGMVMLKSKKKKA.

2 consecutive transmembrane segments (helical) span residues 10-30 (LLLSSISLSIFTYYTFWVIIL) and 50-70 (ILVPVFAGIALLSLISVFIGM).

This sequence belongs to the DPM2 family. As to quaternary structure, component of the dolichol-phosphate mannose (DPM) synthase complex composed of DPMS1, DPMS2 and DPMS3; in the complex interacts directly with DPMS3. Associates with the GPI-GlcNAc transferase (GPI-GnT) complex.

It localises to the endoplasmic reticulum membrane. It participates in protein modification; protein glycosylation. Functionally, regulates the biosynthesis of dolichol phosphate-mannose. Regulatory subunit of the dolichol-phosphate mannose (DPM) synthase complex; essential for the ER localization and stable expression of DPMS1. This chain is Dolichol-phosphate mannose synthase subunit 2, found in Arabidopsis thaliana (Mouse-ear cress).